A 595-amino-acid polypeptide reads, in one-letter code: Methionine--tRNA ligase (595 aa).

Positions 11 to 21 match the 'HIGH' region motif; it reads PYANGPRHIGH. 4 residues coordinate Zn(2+): cysteine 143, cysteine 146, cysteine 156, and cysteine 159. Residues 350–354 carry the 'KMSKS' region motif; it reads KFSSS. Serine 353 contributes to the ATP binding site.

The protein belongs to the class-I aminoacyl-tRNA synthetase family. MetG type 1 subfamily. As to quaternary structure, monomer. It depends on Zn(2+) as a cofactor.

Its subcellular location is the cytoplasm. It carries out the reaction tRNA(Met) + L-methionine + ATP = L-methionyl-tRNA(Met) + AMP + diphosphate. Functionally, is required not only for elongation of protein synthesis but also for the initiation of all mRNA translation through initiator tRNA(fMet) aminoacylation. This chain is Methionine--tRNA ligase, found in Nocardioides sp. (strain ATCC BAA-499 / JS614).